The sequence spans 73 residues: Dermaseptin-1 (73 aa).

The first 22 residues, 1–22, serve as a signal peptide directing secretion; sequence MAFLKKSIFLALFLGMVSLSIC. Residues 23–43 constitute a propeptide, removed in mature form; it reads EEEKRENEGEEEQEDDEQSEM. Positions 25 to 46 are disordered; the sequence is EKRENEGEEEQEDDEQSEMKRG. The segment covering 30 to 40 has biased composition (acidic residues); it reads EGEEEQEDDEQ. Leu70 carries the post-translational modification Leucine amide. Positions 72 to 73 are cleaved as a propeptide — removed in mature form; the sequence is EQ.

In terms of tissue distribution, expressed by the skin glands.

Its subcellular location is the secreted. Has antiparasitic activity against trypomastigote form of T.cruzi (IC(50)=0.68 uM) in vitro but not against L.infantum. Probably acts by permeabilizing cell membranes. In vitro, shows no cytotoxicity against macrophages. Has antibacterial activity. The polypeptide is Dermaseptin-1 (Pithecopus nordestinus (Northeastern Brazilian leaf frog)).